Reading from the N-terminus, the 322-residue chain is Thioredoxin reductase (322 aa).

FAD-binding positions include 12–15 (SGPA), 34–42 (EGAVTAGGA), N51, and V84. C136 and C139 are disulfide-bonded. Positions 176, 182, 239, and 259 each coordinate NADP(+). Residues D279 and 286–289 (RQAI) contribute to the FAD site. Position 286 (R286) interacts with NADP(+).

It belongs to the class-II pyridine nucleotide-disulfide oxidoreductase family. In terms of assembly, homodimer. It depends on FAD as a cofactor.

Its subcellular location is the cytoplasm. It catalyses the reaction [thioredoxin]-dithiol + NADP(+) = [thioredoxin]-disulfide + NADPH + H(+). This chain is Thioredoxin reductase, found in Streptomyces coelicolor (strain ATCC BAA-471 / A3(2) / M145).